The sequence spans 225 residues: Small ribosomal subunit protein uS3 (225 aa).

Positions 38–106 constitute a KH type-2 domain; sequence IRRFLQKKFK…PIGMNIIEVK (69 aa).

This sequence belongs to the universal ribosomal protein uS3 family. As to quaternary structure, part of the 30S ribosomal subunit. Forms a tight complex with proteins S10 and S14.

In terms of biological role, binds the lower part of the 30S subunit head. Binds mRNA in the 70S ribosome, positioning it for translation. The sequence is that of Small ribosomal subunit protein uS3 from Leptospira biflexa serovar Patoc (strain Patoc 1 / Ames).